Consider the following 159-residue polypeptide: Putative ribosomal RNA large subunit methyltransferase H (159 aa).

Residues Leu-76, Gly-108, and 127-132 contribute to the S-adenosyl-L-methionine site; that span reads LSAMTF.

Belongs to the RNA methyltransferase RlmH family.

The protein resides in the cytoplasm. The enzyme catalyses pseudouridine(1915) in 23S rRNA + S-adenosyl-L-methionine = N(3)-methylpseudouridine(1915) in 23S rRNA + S-adenosyl-L-homocysteine + H(+). In terms of biological role, specifically methylates the pseudouridine at position 1915 (m3Psi1915) in 23S rRNA. This is Putative ribosomal RNA large subunit methyltransferase H from Methanospirillum hungatei JF-1 (strain ATCC 27890 / DSM 864 / NBRC 100397 / JF-1).